A 340-amino-acid polypeptide reads, in one-letter code: Methionine import ATP-binding protein MetN (340 aa).

The ABC transporter domain maps to 8 to 246 (ISVKNLNKEI…PYSSITEELF (239 aa)). Residue 40 to 47 (GHSGSGKS) participates in ATP binding.

It belongs to the ABC transporter superfamily. Methionine importer (TC 3.A.1.24) family. In terms of assembly, the complex is composed of two ATP-binding proteins (MetN), two transmembrane proteins (MetI) and a solute-binding protein (MetQ).

It is found in the cell inner membrane. The enzyme catalyses L-methionine(out) + ATP + H2O = L-methionine(in) + ADP + phosphate + H(+). It catalyses the reaction D-methionine(out) + ATP + H2O = D-methionine(in) + ADP + phosphate + H(+). Functionally, part of the ABC transporter complex MetNIQ involved in methionine import. Responsible for energy coupling to the transport system. The protein is Methionine import ATP-binding protein MetN of Chlamydia felis (strain Fe/C-56) (Chlamydophila felis).